Reading from the N-terminus, the 250-residue chain is Probable transcriptional regulatory protein SACE_2018 (250 aa).

This sequence belongs to the TACO1 family.

The protein localises to the cytoplasm. In Saccharopolyspora erythraea (strain ATCC 11635 / DSM 40517 / JCM 4748 / NBRC 13426 / NCIMB 8594 / NRRL 2338), this protein is Probable transcriptional regulatory protein SACE_2018.